Consider the following 349-residue polypeptide: Protein RecA (349 aa).

65–72 (GPESSGKT) serves as a coordination point for ATP.

Belongs to the RecA family.

Its subcellular location is the cytoplasm. Its function is as follows. Can catalyze the hydrolysis of ATP in the presence of single-stranded DNA, the ATP-dependent uptake of single-stranded DNA by duplex DNA, and the ATP-dependent hybridization of homologous single-stranded DNAs. It interacts with LexA causing its activation and leading to its autocatalytic cleavage. The chain is Protein RecA from Azotobacter vinelandii.